We begin with the raw amino-acid sequence, 353 residues long: Chorismate synthase (353 aa).

Residues Arg48 and Arg54 each contribute to the NADP(+) site. FMN-binding positions include Arg125 to Ser127, Asn238 to Ala239, Gly278, Lys293 to Ser297, and Arg319.

It belongs to the chorismate synthase family. As to quaternary structure, homotetramer. FMNH2 serves as cofactor.

The catalysed reaction is 5-O-(1-carboxyvinyl)-3-phosphoshikimate = chorismate + phosphate. It functions in the pathway metabolic intermediate biosynthesis; chorismate biosynthesis; chorismate from D-erythrose 4-phosphate and phosphoenolpyruvate: step 7/7. In terms of biological role, catalyzes the anti-1,4-elimination of the C-3 phosphate and the C-6 proR hydrogen from 5-enolpyruvylshikimate-3-phosphate (EPSP) to yield chorismate, which is the branch point compound that serves as the starting substrate for the three terminal pathways of aromatic amino acid biosynthesis. This reaction introduces a second double bond into the aromatic ring system. This is Chorismate synthase from Bordetella parapertussis (strain 12822 / ATCC BAA-587 / NCTC 13253).